Consider the following 339-residue polypeptide: Enhancer of mRNA-decapping protein 1 (339 aa).

Disordered stretches follow at residues 1–240 and 309–339; these read MMMH…PPRY and FPVN…SAKK. A compositionally biased stretch (polar residues) spans 13–25; sequence SPGSENHSNPASR. Composition is skewed to basic and acidic residues over residues 26–38 and 91–100; these read EQSK…ERRL and DNKEKNKKLL. Positions 111–131 are enriched in low complexity; that stretch reads NFSFYSESNSNSNSNVSSNSN. Basic and acidic residues predominate over residues 163–173; that stretch reads RPDKNGKKGPV. Residues 196-212 show a composition bias toward polar residues; the sequence is FQRTSPKQQANTINDEN. Positions 213–237 are enriched in low complexity; that stretch reads SSPSSSASSVSMSSPRPVAGAVAAP.

It belongs to the EDC family.

It is found in the cytoplasm. In terms of biological role, mRNA-binding protein which stimulates mRNA decapping. This Scheffersomyces stipitis (strain ATCC 58785 / CBS 6054 / NBRC 10063 / NRRL Y-11545) (Yeast) protein is Enhancer of mRNA-decapping protein 1 (EDC1).